The chain runs to 399 residues: Tryptophan synthase beta chain (399 aa).

At lysine 92 the chain carries N6-(pyridoxal phosphate)lysine.

Belongs to the TrpB family. In terms of assembly, tetramer of two alpha and two beta chains. It depends on pyridoxal 5'-phosphate as a cofactor.

It carries out the reaction (1S,2R)-1-C-(indol-3-yl)glycerol 3-phosphate + L-serine = D-glyceraldehyde 3-phosphate + L-tryptophan + H2O. The protein operates within amino-acid biosynthesis; L-tryptophan biosynthesis; L-tryptophan from chorismate: step 5/5. Functionally, the beta subunit is responsible for the synthesis of L-tryptophan from indole and L-serine. The sequence is that of Tryptophan synthase beta chain from Legionella pneumophila (strain Corby).